Consider the following 157-residue polypeptide: Phosphopantetheine adenylyltransferase (157 aa).

T8 contributes to the substrate binding site. ATP is bound by residues 8-9 (TF) and H16. Substrate contacts are provided by K40, T72, and R86. ATP contacts are provided by residues 87-89 (GLR), E97, and 122-128 (YSFLSSS).

Belongs to the bacterial CoaD family. Homohexamer. Mg(2+) is required as a cofactor.

It is found in the cytoplasm. The catalysed reaction is (R)-4'-phosphopantetheine + ATP + H(+) = 3'-dephospho-CoA + diphosphate. Its pathway is cofactor biosynthesis; coenzyme A biosynthesis; CoA from (R)-pantothenate: step 4/5. In terms of biological role, reversibly transfers an adenylyl group from ATP to 4'-phosphopantetheine, yielding dephospho-CoA (dPCoA) and pyrophosphate. This is Phosphopantetheine adenylyltransferase from Prochlorococcus marinus (strain MIT 9215).